Consider the following 806-residue polypeptide: Leucine--tRNA ligase (806 aa).

The short motif at 40 to 51 (PYPSGAGLHVGH) is the 'HIGH' region element. The 'KMSKS' region motif lies at 578–582 (KMSKS). Lys581 is an ATP binding site.

This sequence belongs to the class-I aminoacyl-tRNA synthetase family.

It localises to the cytoplasm. It carries out the reaction tRNA(Leu) + L-leucine + ATP = L-leucyl-tRNA(Leu) + AMP + diphosphate. This chain is Leucine--tRNA ligase, found in Staphylococcus aureus (strain MSSA476).